Consider the following 174-residue polypeptide: Large ribosomal subunit protein bL12cy (174 aa).

Residues M1 to T45 constitute a chloroplast transit peptide.

It belongs to the bacterial ribosomal protein bL12 family.

The protein resides in the plastid. The protein localises to the chloroplast. This Secale cereale (Rye) protein is Large ribosomal subunit protein bL12cy (RPL12-2).